The chain runs to 513 residues: MADKAQLQEAIKTQGEVVRKLKSEKASKEQIDEEVARLLQLKAQLGGDEGKHVFVLKTAKGTRDYNPKQMAIREKVFNIIINCFKRHGAETIDSPVFELKETLTGKYGEDSKLIYDLKDQGGELLSLRYDLTVPFARYLAMNKITNIKRYHIAKVYRRDNPAMTRGRYREFYQCDFDIAGQYDAMIPDAECLKLVYEILSELDLGDFRIKVNDRRILDGMFAICGVPDEKFRTICSTVDKLDKLAWEEVKKEMVNEKGLSEEVADRIRDYVSMQGGKDLAERLLQDPKLSQSKQACAGITDMKLLFSYLELFQITDKVVFDLSLARGLDYYTGVIYEAILTQANPAPASTPAEQNGAEDAGVSVGSVAGGGRYDGLVGMFDPKGRKVPCVGVSIGIERVFSIMEQKAELSSEKVRTTETQVLVASAQKNLLEERLKLTAELWNAGIKAEVLYKKNPKLLSQLQHCEDTGIPLVAILGEQELKDGVVKLRNVASREEVDVPRAELVDEVKKRTS.

A mitochondrion-targeting transit peptide spans 1–24 (MADKAQLQEAIKTQGEVVRKLKSE). One can recognise a WHEP-TRS domain in the interval 3–59 (DKAQLQEAIKTQGEVVRKLKSEKASKEQIDEEVARLLQLKAQLGGDEGKHVFVLKTA). L-histidine-binding positions include 130 to 132 (DLT), arginine 157, glutamine 173, aspartate 177, arginine 326, and 330 to 331 (YY).

It belongs to the class-II aminoacyl-tRNA synthetase family.

It localises to the cytoplasm. The protein resides in the mitochondrion. It catalyses the reaction tRNA(His) + L-histidine + ATP = L-histidyl-tRNA(His) + AMP + diphosphate + H(+). In terms of biological role, catalyzes the aminoacylation of histidyl-tRNA. This Danio rerio (Zebrafish) protein is Histidine--tRNA ligase.